The primary structure comprises 313 residues: 2,3-dihydroxyphenylpropionate/2,3-dihydroxicinnamic acid 1,2-dioxygenase (313 aa).

Catalysis depends on histidine 115, which acts as the Proton donor. The active-site Proton acceptor is the histidine 179.

It belongs to the LigB/MhpB extradiol dioxygenase family. As to quaternary structure, homotetramer. The cofactor is Fe(2+).

The enzyme catalyses 3-(2,3-dihydroxyphenyl)propanoate + O2 = (2Z,4E)-2-hydroxy-6-oxonona-2,4-dienedioate + H(+). It carries out the reaction (2E)-3-(2,3-dihydroxyphenyl)prop-2-enoate + O2 = (2Z,4E,7E)-2-hydroxy-6-oxonona-2,4,7-trienedioate + H(+). It participates in aromatic compound metabolism; 3-phenylpropanoate degradation. Functionally, catalyzes the non-heme iron(II)-dependent oxidative cleavage of 2,3-dihydroxyphenylpropionic acid and 2,3-dihydroxicinnamic acid into 2-hydroxy-6-ketononadienedioate and 2-hydroxy-6-ketononatrienedioate, respectively. The polypeptide is 2,3-dihydroxyphenylpropionate/2,3-dihydroxicinnamic acid 1,2-dioxygenase (Mycobacterium ulcerans (strain Agy99)).